Here is a 270-residue protein sequence, read N- to C-terminus: Molybdenum-pterin-binding protein MopB (270 aa).

Mop domains follow at residues 131–197 and 203–269; these read RTSA…LLAG and RLSV…ILAL.

The protein belongs to the ModE family.

This chain is Molybdenum-pterin-binding protein MopB (mopB), found in Rhodobacter capsulatus (Rhodopseudomonas capsulata).